The sequence spans 342 residues: Probable receptor-like protein kinase At4g10390 (342 aa).

One can recognise a Protein kinase domain in the interval 41–336 (SNFSRLIGSG…IKEIPSLSFL (296 aa)). ATP is bound by residues 47 to 55 (IGSGGYSSI) and lysine 69. Catalysis depends on aspartate 165, which acts as the Proton acceptor. Residues serine 169 and serine 201 each carry the phosphoserine modification. A Phosphotyrosine modification is found at tyrosine 220.

It belongs to the protein kinase superfamily. Ser/Thr protein kinase family.

The enzyme catalyses L-seryl-[protein] + ATP = O-phospho-L-seryl-[protein] + ADP + H(+). The catalysed reaction is L-threonyl-[protein] + ATP = O-phospho-L-threonyl-[protein] + ADP + H(+). This Arabidopsis thaliana (Mouse-ear cress) protein is Probable receptor-like protein kinase At4g10390.